The chain runs to 172 residues: MRTLVMVACAVSLAACSSPPKPPTVSGRHRIPINSPAAQEELRLQVFPQEPTAQATMWPARPPKQTVNVYFPQDVTVFRPTSAQINQLHTLLWPVPKHINVRGLTDNSCPPPGDTQVARVRALAIYNWLINQGVPASRITISYAPVKDYASNAPLSPGRVLNRRVDIEILRK.

A signal peptide spans 1–15 (MRTLVMVACAVSLAA). C16 carries the N-palmitoyl cysteine lipid modification. A lipid anchor (S-diacylglycerol cysteine) is attached at C16. An OmpA-like domain is found at 58-172 (WPARPPKQTV…RRVDIEILRK (115 aa)).

The protein resides in the cell outer membrane. The protein is Type IV secretion system putative outer membrane lipoprotein BMEII0036 of Brucella melitensis biotype 1 (strain ATCC 23456 / CCUG 17765 / NCTC 10094 / 16M).